Here is a 181-residue protein sequence, read N- to C-terminus: Oligoribonuclease (181 aa).

Residues 8–171 (LIWLDMEMTG…ADILESIEEM (164 aa)) form the Exonuclease domain. Y129 is a catalytic residue.

Belongs to the oligoribonuclease family.

The protein localises to the cytoplasm. Functionally, 3'-to-5' exoribonuclease specific for small oligoribonucleotides. The polypeptide is Oligoribonuclease (Chromobacterium violaceum (strain ATCC 12472 / DSM 30191 / JCM 1249 / CCUG 213 / NBRC 12614 / NCIMB 9131 / NCTC 9757 / MK)).